The chain runs to 536 residues: Inactive phospholipase D5 (536 aa).

Residues 69 to 89 form a helical membrane-spanning segment; that stretch reads IVIFALVCCFAILVALIFSAV. A glycan (N-linked (GlcNAc...) asparagine) is linked at asparagine 121. The 28-residue stretch at 215-242 folds into the PLD phosphodiesterase 1 domain; that stretch reads NKGRLQSSFWIVDKQHVYIGSAGLDWQS. N-linked (GlcNAc...) asparagine glycosylation occurs at asparagine 302. Residues 434–460 enclose the PLD phosphodiesterase 2 domain; the sequence is FPRLNRNKYMVTDGAAYIGNFDWVGND.

This sequence belongs to the phospholipase D family.

The protein localises to the membrane. This chain is Inactive phospholipase D5 (PLD5), found in Homo sapiens (Human).